A 504-amino-acid chain; its full sequence is UDP-N-acetylmuramoylalanine--D-glutamate ligase (504 aa).

Residue 129–135 coordinates ATP; the sequence is GTNGKTT.

It belongs to the MurCDEF family.

It is found in the cytoplasm. It carries out the reaction UDP-N-acetyl-alpha-D-muramoyl-L-alanine + D-glutamate + ATP = UDP-N-acetyl-alpha-D-muramoyl-L-alanyl-D-glutamate + ADP + phosphate + H(+). Its pathway is cell wall biogenesis; peptidoglycan biosynthesis. In terms of biological role, cell wall formation. Catalyzes the addition of glutamate to the nucleotide precursor UDP-N-acetylmuramoyl-L-alanine (UMA). In Cupriavidus metallidurans (strain ATCC 43123 / DSM 2839 / NBRC 102507 / CH34) (Ralstonia metallidurans), this protein is UDP-N-acetylmuramoylalanine--D-glutamate ligase.